The following is a 358-amino-acid chain: Transmembrane protein 144 homolog B (358 aa).

10 helical membrane passes run 6-26 (VIGY…YVPV), 35-55 (LAFT…AMFI), 60-79 (IFDP…NFCV), 86-108 (IGIG…FTGK), 122-142 (PALN…FFFI), 211-231 (ILGI…MVPM), 244-264 (LSFV…VFIV), 279-299 (IFPS…LMVA), 307-327 (IGFP…SVFY), and 337-357 (LLIL…LALS).

The protein belongs to the TMEM144 family.

It localises to the membrane. The sequence is that of Transmembrane protein 144 homolog B (tmem144B) from Dictyostelium discoideum (Social amoeba).